We begin with the raw amino-acid sequence, 375 residues long: Adiponectin receptor protein 1 (375 aa).

A disordered region spans residues 1 to 60 (MSSHKGSAGAQGNGAPSGNREADTVELAELGPLLEEKGKRAASSPAKAEEDQACPVPQEE). At 1 to 136 (MSSHKGSAGA…SIFRIHTETG (136 aa)) the chain is on the cytoplasmic side. Residues 137 to 157 (NIWTHLLGFVLFLFLGILTML) form a helical membrane-spanning segment. The Extracellular portion of the chain corresponds to 158–170 (RPNMYFMAPLQEK). Residues 171–191 (VVFGMFFLGAVLCLSFSWLFH) form a helical membrane-spanning segment. His191 is a binding site for Zn(2+). Residues 192-203 (TVYCHSEKVSRT) are Cytoplasmic-facing. Residues 204 to 224 (FSKLDYSGIALLIMGSFVPWL) form a helical membrane-spanning segment. The Extracellular segment spans residues 225 to 234 (YYSFYCSPQP). The helical transmembrane segment at 235–255 (RLIYLSIVCVLGISAIIVAQW) threads the bilayer. The Cytoplasmic segment spans residues 256–264 (DRFATPKHR). A helical membrane pass occupies residues 265–285 (QTRAGVFLGLGLSGVVPTMHF). The Extracellular portion of the chain corresponds to 286–298 (TIAEGFVKATTVG). A helical membrane pass occupies residues 299–319 (QMGWFFLMAVMYITGAGLYAA). Topologically, residues 320-337 (RIPERFFPGKFDIWFQSH) are cytoplasmic. 2 residues coordinate Zn(2+): His337 and His341. A helical membrane pass occupies residues 338–358 (QIFHVLVVAAAFVHFYGVSNL). At 359-375 (QEFRYGLEGGCTDDSLL) the chain is on the extracellular side.

It belongs to the ADIPOR family. As to quaternary structure, may form homooligomers and heterooligomers with ADIPOR2. Interacts with APPL2 (via BAR domain); hinders the accessibility of APPL1 to ADIPOR1; negatively regulates adiponectin signaling; ADIPOQ dissociates this interaction and facilitates the recruitment of APPL1 to ADIPOR1. Interacts with APPL1; ADIPOQ enhances this interaction; inhibites adiponectin-stimulated binding of APPL2 to ADIPOR1. In terms of tissue distribution, detected in brain and quadriceps muscle (at protein level). Widely expressed. Expressed in heart, kidney, liver, lung, skeletal muscle, white adipose tissue, brown adipose tissue, aorta and spleen. Weakly expressed in brain and testis.

The protein localises to the cell membrane. In terms of biological role, receptor for ADIPOQ, an essential hormone secreted by adipocytes that regulates glucose and lipid metabolism. Required for normal glucose and fat homeostasis and for maintaining a normal body weight. ADIPOQ-binding activates a signaling cascade that leads to increased AMPK activity, and ultimately to increased fatty acid oxidation, increased glucose uptake and decreased gluconeogenesis. Has high affinity for globular adiponectin and low affinity for full-length adiponectin. This is Adiponectin receptor protein 1 from Mus musculus (Mouse).